A 198-amino-acid chain; its full sequence is MNHIVWHQHAITHSERAAQKGHRGAILWFTGLSGAGKSTLAGALEAELFRRGLHSYLLDGDNVRHGLCKDLGFSLEDRRENIRRVGEVAKLMLDAGLLVLSAFVSPQRAERDLVRALVGEGEFIEVHVATPLTVCESRDPKGLYQKARAGEIKDFTGISSPYEAPVSAELVIDTSEGDLDSQVAKLVDYLISGGYIPA.

31–38 (GLSGAGKS) is a binding site for ATP. Ser-105 serves as the catalytic Phosphoserine intermediate.

This sequence belongs to the APS kinase family.

The enzyme catalyses adenosine 5'-phosphosulfate + ATP = 3'-phosphoadenylyl sulfate + ADP + H(+). The protein operates within sulfur metabolism; hydrogen sulfide biosynthesis; sulfite from sulfate: step 2/3. In terms of biological role, catalyzes the synthesis of activated sulfate. The chain is Adenylyl-sulfate kinase from Shewanella amazonensis (strain ATCC BAA-1098 / SB2B).